A 278-amino-acid polypeptide reads, in one-letter code: MKTTKDFWVMKNEGKKIVMITAYDYPSAKQAEQAGADIILVGDSLGNVVLGYDSTVYVTMEDMIHHGKAAKRGAPNTFIVADMPFMSCHLSIRDTLLNGARLIQETGAQAVKVEGADEMIPHIKALVRAGIPVVSHLGLTPQTAAVLGGFKVQGKDGEAARKMLEDVKECQEAGAFALVLECIPKQLAQEISTTLTIPTIGIGAGVHTDGQVLVYHDILTYGVNRAPKFVKAYANADQLMLKGLQDYADEVRSMNFPDDEHSFTMKEEELKTLYGGRG.

Mg(2+)-binding residues include Asp-43 and Asp-82. 3-methyl-2-oxobutanoate is bound by residues 43–44 (DS), Asp-82, and Lys-112. Residue Glu-114 coordinates Mg(2+). Residue Glu-181 is the Proton acceptor of the active site.

It belongs to the PanB family. Homodecamer; pentamer of dimers. Mg(2+) serves as cofactor.

The protein resides in the cytoplasm. The enzyme catalyses 3-methyl-2-oxobutanoate + (6R)-5,10-methylene-5,6,7,8-tetrahydrofolate + H2O = 2-dehydropantoate + (6S)-5,6,7,8-tetrahydrofolate. It participates in cofactor biosynthesis; (R)-pantothenate biosynthesis; (R)-pantoate from 3-methyl-2-oxobutanoate: step 1/2. In terms of biological role, catalyzes the reversible reaction in which hydroxymethyl group from 5,10-methylenetetrahydrofolate is transferred onto alpha-ketoisovalerate to form ketopantoate. The sequence is that of 3-methyl-2-oxobutanoate hydroxymethyltransferase from Desulfitobacterium hafniense (strain DSM 10664 / DCB-2).